The sequence spans 157 residues: C-type lectin 9a (157 aa).

A signal peptide spans 1-23 (MGRFIFVSFGLLVVFLSLSGTGA). Disulfide bonds link Cys27–Cys38, Cys55–Cys151, and Cys126–Cys143. The region spanning 34–152 (YDQYCYKPFN…CQAKKPFVCK (119 aa)) is the C-type lectin domain.

This sequence belongs to the snaclec family. Heteromultimer; disulfide-linked. In terms of tissue distribution, expressed by the venom gland.

The protein resides in the secreted. Its function is as follows. Interferes with one step of hemostasis (modulation of platelet aggregation, or coagulation cascade, for example). In Crotalus adamanteus (Eastern diamondback rattlesnake), this protein is C-type lectin 9a.